The sequence spans 309 residues: Homoserine O-succinyltransferase (309 aa).

The active-site Acyl-thioester intermediate is Cys142. Substrate contacts are provided by Lys163 and Ser192. His235 functions as the Proton acceptor in the catalytic mechanism. Residue Glu237 is part of the active site. Substrate is bound at residue Arg249.

This sequence belongs to the MetA family.

The protein resides in the cytoplasm. It catalyses the reaction L-homoserine + succinyl-CoA = O-succinyl-L-homoserine + CoA. It participates in amino-acid biosynthesis; L-methionine biosynthesis via de novo pathway; O-succinyl-L-homoserine from L-homoserine: step 1/1. Functionally, transfers a succinyl group from succinyl-CoA to L-homoserine, forming succinyl-L-homoserine. The sequence is that of Homoserine O-succinyltransferase from Serratia proteamaculans (strain 568).